A 440-amino-acid chain; its full sequence is Gap junction alpha-8 protein (440 aa).

The stretch at 2–12 is an intramembrane region; the sequence is GDWSFLGNILE. The Cytoplasmic portion of the chain corresponds to 13 to 21; that stretch reads EVNEHSTVI. A helical transmembrane segment spans residues 22 to 42; the sequence is GRVWLTVLFIFRILILGTAAE. The Extracellular portion of the chain corresponds to 43–71; it reads FVWGDEQSDFVCNTQQPGCENVCYDEAFP. Intrachain disulfides connect Cys-54–Cys-201, Cys-61–Cys-195, and Cys-65–Cys-190. A helical membrane pass occupies residues 72–92; sequence ISHIRLWVLQIIFVSTPSLMY. The Cytoplasmic portion of the chain corresponds to 93–161; it reads VGHAVHHVRM…GTLLRTYVCH (69 aa). The tract at residues 111-143 is disordered; the sequence is AEELCQQSRSNGGERVPIAPDQASIRKSSSSSK. A helical transmembrane segment spans residues 162 to 182; sequence IIFKTLFEVGFIVGHYFLYGF. Residues 183–210 are Extracellular-facing; that stretch reads RILPLYRCSRWPCPNVVDCFVSRPTEKT. A helical transmembrane segment spans residues 211 to 231; that stretch reads IFILFMLSVAFVSLFLNIMEM. The Cytoplasmic portion of the chain corresponds to 232 to 440; that stretch reads SHLGMKGIRS…SRARSDDLTI (209 aa). The disordered stretch occupies residues 334–440; sequence GAQEVEREEQ…SRARSDDLTI (107 aa). Basic and acidic residues-rich tracts occupy residues 353–364 and 375–399; these read VGEKKQEAEKVA and DGEKVETPGVGKDDEKEELQAEKVT. Residues 423–432 are compositionally biased toward low complexity; sequence LSRLSKASSR.

It belongs to the connexin family. Alpha-type (group II) subfamily. In terms of assembly, a hemichannel or connexon is composed of a hexamer of connexins. A functional gap junction is formed by the apposition of two hemichannels. Forms heteromeric channels with GJA3. As to expression, detected in eye lens (at protein level).

The protein resides in the cell membrane. It is found in the cell junction. The protein localises to the gap junction. Structural component of eye lens gap junctions. Gap junctions are dodecameric channels that connect the cytoplasm of adjoining cells. They are formed by the docking of two hexameric hemichannels, one from each cell membrane. Small molecules and ions diffuse from one cell to a neighboring cell via the central pore. This chain is Gap junction alpha-8 protein (Gja8), found in Rattus norvegicus (Rat).